The following is a 215-amino-acid chain: Transmembrane protein 267 (215 aa).

The next 3 membrane-spanning stretches (helical) occupy residues 77 to 97 (FGEV…HFFQ), 114 to 134 (FLHC…AVHL), and 178 to 198 (SSFY…LMYL).

The protein localises to the membrane. The polypeptide is Transmembrane protein 267 (Mus musculus (Mouse)).